A 313-amino-acid polypeptide reads, in one-letter code: Putative adhesin P1-like protein MPN_202 (313 aa).

Residues 1–16 (MGSQNQGSTTTTSAGN) are compositionally biased toward low complexity. The tract at residues 1 to 44 (MGSQNQGSTTTTSAGNPDSLVTDKVDQKGQVQTSGQNLSDTNYT) is disordered. Residues 29–44 (GQVQTSGQNLSDTNYT) show a composition bias toward polar residues.

This sequence belongs to the adhesin P1 family.

The polypeptide is Putative adhesin P1-like protein MPN_202 (Mycoplasma pneumoniae (strain ATCC 29342 / M129 / Subtype 1) (Mycoplasmoides pneumoniae)).